Consider the following 232-residue polypeptide: Ashwin (232 aa).

2 stretches are compositionally biased toward basic and acidic residues: residues 64 to 97 and 116 to 127; these read DLPK…DGLR and KKTENGDNDRLR. Residues 64–232 form a disordered region; sequence DLPKSRWGKM…KRKIQHVTWP (169 aa). Over residues 130–140 the composition is skewed to polar residues; sequence PQASATSNTFR. Ser-143 carries the phosphoserine modification. Low complexity predominate over residues 144–156; it reads DSSSSVSPLVLSS. Residues 163–179 show a composition bias toward basic and acidic residues; the sequence is KMEHGNNDNKQNHDLTH. Residues Ser-182, Ser-189, and Ser-193 each carry the phosphoserine modification. At Thr-198 the chain carries Phosphothreonine.

The protein belongs to the ashwin family. As to quaternary structure, component of the tRNA-splicing ligase complex.

The protein resides in the nucleus. The polypeptide is Ashwin (Bos taurus (Bovine)).